The chain runs to 180 residues: Inner membrane-spanning protein YciB (180 aa).

The next 6 helical transmembrane spans lie at 4 to 24, 25 to 45, 52 to 72, 76 to 96, 118 to 138, and 150 to 170; these read LLSE…GGGI, QHAT…CYVI, LSII…ISGN, IKIK…MSGI, ITLS…NEVV, and FKVF…LPLL.

This sequence belongs to the YciB family.

Its subcellular location is the cell inner membrane. Functionally, plays a role in cell envelope biogenesis, maintenance of cell envelope integrity and membrane homeostasis. This Rickettsia massiliae (strain Mtu5) protein is Inner membrane-spanning protein YciB.